We begin with the raw amino-acid sequence, 2184 residues long: Genome polyprotein (2184 aa).

G2 is lipidated: N-myristoyl glycine; by host. Over 2–1494 (GAQVSTQKTG…HVSRAFICLQ (1493 aa)) the chain is Cytoplasmic. Residues 567–583 (FYQGDVQNAVEGAMVRV) form an amphipathic alpha-helix region. Residues H871 and D889 each act as for protease 2A activity in the active site. Zn(2+) is bound by residues C906 and C908. The active-site For protease 2A activity is the C960. Zn(2+)-binding residues include C966 and H968. A membrane-binding region spans residues 1100-1172 (NNGWLKKFTE…EQSAPSQGDQ (73 aa)). The oligomerization stretch occupies residues 1100 to 1238 (NNGWLKKFTE…SPGAGKSVAT (139 aa)). The RNA-binding stretch occupies residues 1121–1125 (AIKIQ). One can recognise an SF3 helicase domain in the interval 1204 to 1360 (EKKMSNYIQF…SMYSQNGKIN (157 aa)). Zn(2+) is bound by residues C1368, C1380, and C1385. A C4-type; degenerate zinc finger spans residues 1368–1385 (CDEDCCPVNFKKCCPLVC). The tract at residues 1412 to 1419 (EYNHRHSV) is RNA-binding. The segment at 1423–1428 (LEALFQ) is oligomerization. The stretch at 1495–1510 (ALTTFVSVAGIIYIIY) is an intramembrane region. The Cytoplasmic portion of the chain corresponds to 1511 to 2184 (KLFAGFQGAY…TLRRKWLDSF (674 aa)). At Y1520 the chain carries O-(5'-phospho-RNA)-tyrosine. The Peptidase C3 domain occupies 1540–1718 (GPAFEFAVAM…FSAALLRHYF (179 aa)). Residues H1579, E1610, and C1686 each act as for protease 3C activity in the active site. The region spanning 1949 to 2065 (GHLIAFDYSG…SYPWPIDASL (117 aa)) is the RdRp catalytic domain. The Mg(2+) site is built by D1955 and D2051.

This sequence belongs to the picornaviruses polyprotein family. In terms of assembly, interacts with capsid protein VP1 and capsid protein VP3 to form heterotrimeric protomers. As to quaternary structure, interacts with capsid protein VP0, and capsid protein VP3 to form heterotrimeric protomers. Five protomers subsequently associate to form pentamers which serve as building blocks for the capsid. Interacts with capsid protein VP2, capsid protein VP3 and capsid protein VP4 following cleavage of capsid protein VP0. Interacts with capsid protein VP1 and capsid protein VP3 in the mature capsid. In terms of assembly, interacts with capsid protein VP0 and capsid protein VP1 to form heterotrimeric protomers. Five protomers subsequently associate to form pentamers which serve as building blocks for the capsid. Interacts with capsid protein VP4 in the mature capsid. Interacts with protein 2C; this interaction may be important for virion morphogenesis. As to quaternary structure, interacts with capsid protein VP1 and capsid protein VP3. Homodimer. In terms of assembly, homohexamer; forms a hexameric ring structure with 6-fold symmetry characteristic of AAA+ ATPases. Interacts (via N-terminus) with host RTN3 (via reticulon domain); this interaction is important for viral replication. Interacts with capsid protein VP3; this interaction may be important for virion morphogenesis. As to quaternary structure, interacts with protein 3CD. Homodimer. Interacts with host GBF1. Interacts (via GOLD domain) with host ACBD3 (via GOLD domain); this interaction allows the formation of a viral protein 3A/ACBD3 heterotetramer with a 2:2 stoichiometry, which will stimulate the recruitment of host PI4KB in order to synthesize PI4P at the viral RNA replication sites. In terms of assembly, interacts with RNA-directed RNA polymerase. As to quaternary structure, interacts with protein 3AB and with RNA-directed RNA polymerase. Interacts with Viral protein genome-linked and with protein 3CD. It depends on Mg(2+) as a cofactor. Specific enzymatic cleavages in vivo by the viral proteases yield processing intermediates and the mature proteins. Post-translationally, myristoylation is required for the formation of pentamers during virus assembly. Further assembly of 12 pentamers and a molecule of genomic RNA generates the provirion. In terms of processing, during virion maturation, immature virions are rendered infectious following cleavage of VP0 into VP4 and VP2. This maturation seems to be an autocatalytic event triggered by the presence of RNA in the capsid and it is followed by a conformational change infectious virion. Myristoylation is required during RNA encapsidation and formation of the mature virus particle. Post-translationally, VPg is uridylylated by the polymerase into VPg-pUpU. This acts as a nucleotide-peptide primer for the genomic RNA replication.

It localises to the virion. The protein localises to the host cytoplasm. Its subcellular location is the host cytoplasmic vesicle membrane. It is found in the host nucleus. The catalysed reaction is a ribonucleoside 5'-triphosphate + H2O = a ribonucleoside 5'-diphosphate + phosphate + H(+). It catalyses the reaction Selective cleavage of Tyr-|-Gly bond in the picornavirus polyprotein.. It carries out the reaction RNA(n) + a ribonucleoside 5'-triphosphate = RNA(n+1) + diphosphate. The enzyme catalyses Selective cleavage of Gln-|-Gly bond in the poliovirus polyprotein. In other picornavirus reactions Glu may be substituted for Gln, and Ser or Thr for Gly.. Replication or transcription is subject to high level of random mutations by the nucleotide analog ribavirin. Forms an icosahedral capsid of pseudo T=3 symmetry with capsid proteins VP2 and VP3. The capsid is 300 Angstroms in diameter, composed of 60 copies of each capsid protein and enclosing the viral positive strand RNA genome. Capsid protein VP1 mainly forms the vertices of the capsid. Capsid protein VP1 interacts with host ITGA2/ITGB1 to provide virion attachment to target host cells. This attachment induces virion internalization predominantly through caveolin-mediated endocytosis. Tyrosine kinases are probably involved in the entry process. After binding to its receptor, the capsid undergoes conformational changes. Capsid protein VP1 N-terminus (that contains an amphipathic alpha-helix) and capsid protein VP4 are externalized. Together, they shape a pore in the host membrane through which viral genome is translocated to host cell cytoplasm. Functionally, forms an icosahedral capsid of pseudo T=3 symmetry with capsid proteins VP2 and VP3. The capsid is 300 Angstroms in diameter, composed of 60 copies of each capsid protein and enclosing the viral positive strand RNA genome. Its function is as follows. Lies on the inner surface of the capsid shell. After binding to the host receptor, the capsid undergoes conformational changes. Capsid protein VP4 is released, Capsid protein VP1 N-terminus is externalized, and together, they shape a pore in the host membrane through which the viral genome is translocated into the host cell cytoplasm. In terms of biological role, component of immature procapsids, which is cleaved into capsid proteins VP4 and VP2 after maturation. Allows the capsid to remain inactive before the maturation step. Cysteine protease that cleaves viral polyprotein and specific host proteins. It is responsible for the autocatalytic cleavage between the P1 and P2 regions, which is the first cleavage occurring in the polyprotein. Also cleaves the host translation initiation factor EIF4G1, in order to shut down the capped cellular mRNA translation. Inhibits the host nucleus-cytoplasm protein and RNA trafficking by cleaving host members of the nuclear pores. Counteracts stress granule formation probably by antagonizing its assembly or promoting its dissassembly. Functionally, plays an essential role in the virus replication cycle by acting as a viroporin. Creates a pore in the host endoplasmic reticulum and as a consequence releases Ca2+ in the cytoplasm of infected cell. In turn, high levels of cytoplasmic calcium may trigger membrane trafficking and transport of viral ER-associated proteins to viroplasms, sites of viral genome replication. Its function is as follows. Induces and associates with structural rearrangements of intracellular membranes. Displays RNA-binding, nucleotide binding and NTPase activities. May play a role in virion morphogenesis and viral RNA encapsidation by interacting with the capsid protein VP3. In terms of biological role, localizes the viral replication complex to the surface of membranous vesicles. Together with protein 3CD binds the Cis-Active RNA Element (CRE) which is involved in RNA synthesis initiation. Acts as a cofactor to stimulate the activity of 3D polymerase, maybe through a nucleid acid chaperone activity. Localizes the viral replication complex to the surface of membranous vesicles. It inhibits host cell endoplasmic reticulum-to-Golgi apparatus transport and causes the disassembly of the Golgi complex, possibly through GBF1 interaction. This would result in depletion of MHC, trail receptors and IFN receptors at the host cell surface. Plays an essential role in viral RNA replication by recruiting ACBD3 and PI4KB at the viral replication sites, thereby allowing the formation of the rearranged membranous structures where viral replication takes place. Functionally, acts as a primer for viral RNA replication and remains covalently bound to viral genomic RNA. VPg is uridylylated prior to priming replication into VPg-pUpU. The oriI viral genomic sequence may act as a template for this. The VPg-pUpU is then used as primer on the genomic RNA poly(A) by the RNA-dependent RNA polymerase to replicate the viral genome. During genome replication, the VPg-RNA linkage is removed by the host TDP2, thereby accelerating replication. During the late stage of the replication cycle, host TDP2 is excluded from sites of viral RNA synthesis and encapsidation, allowing for the generation of progeny virions. Its function is as follows. Involved in the viral replication complex and viral polypeptide maturation. It exhibits protease activity with a specificity and catalytic efficiency that is different from protease 3C. Protein 3CD lacks polymerase activity. Protein 3CD binds to the 5'UTR of the viral genome. In terms of biological role, replicates the viral genomic RNA on the surface of intracellular membranes. May form linear arrays of subunits that propagate along a strong head-to-tail interaction called interface-I. Covalently attaches UMP to a tyrosine of VPg, which is used to prime RNA synthesis. The positive stranded RNA genome is first replicated at virus induced membranous vesicles, creating a dsRNA genomic replication form. This dsRNA is then used as template to synthesize positive stranded RNA genomes. ss(+)RNA genomes are either translated, replicated or encapsidated. Major viral protease that mediates proteolytic processing of the polyprotein. Cleaves host EIF5B, contributing to host translation shutoff. Also cleaves host PABPC1, contributing to host translation shutoff. Cleaves host NLRP1, triggers host N-glycine-mediated degradation of the autoinhibitory NLRP1 N-terminal fragment. This chain is Genome polyprotein, found in Homo sapiens (Human).